Consider the following 398-residue polypeptide: Acetate kinase (398 aa).

Asn7 provides a ligand contact to Mg(2+). Lys14 serves as a coordination point for ATP. Arg91 is a substrate binding site. Catalysis depends on Asp148, which acts as the Proton donor/acceptor. Residues 208–212 (HIGNG), 283–285 (DMR), and 331–335 (GVGEN) each bind ATP. Glu384 serves as a coordination point for Mg(2+).

This sequence belongs to the acetokinase family. Homodimer. Requires Mg(2+) as cofactor. The cofactor is Mn(2+).

It localises to the cytoplasm. The enzyme catalyses acetate + ATP = acetyl phosphate + ADP. Its pathway is metabolic intermediate biosynthesis; acetyl-CoA biosynthesis; acetyl-CoA from acetate: step 1/2. In terms of biological role, catalyzes the formation of acetyl phosphate from acetate and ATP. Can also catalyze the reverse reaction. The sequence is that of Acetate kinase from Bacteroides fragilis (strain ATCC 25285 / DSM 2151 / CCUG 4856 / JCM 11019 / LMG 10263 / NCTC 9343 / Onslow / VPI 2553 / EN-2).